We begin with the raw amino-acid sequence, 134 residues long: Transcription antitermination protein NusB (134 aa).

Belongs to the NusB family.

Involved in transcription antitermination. Required for transcription of ribosomal RNA (rRNA) genes. Binds specifically to the boxA antiterminator sequence of the ribosomal RNA (rrn) operons. The chain is Transcription antitermination protein NusB from Syntrophomonas wolfei subsp. wolfei (strain DSM 2245B / Goettingen).